Consider the following 511-residue polypeptide: 2-isopropylmalate synthase (511 aa).

The 263-residue stretch at 5 to 267 folds into the Pyruvate carboxyltransferase domain; the sequence is LFIFDTTLRD…DTRIDATQIV (263 aa). Mn(2+) contacts are provided by aspartate 14, histidine 202, histidine 204, and asparagine 238. Residues 393–511 are regulatory domain; the sequence is KLLSMKVCSE…SKRERAHPQV (119 aa).

The protein belongs to the alpha-IPM synthase/homocitrate synthase family. LeuA type 1 subfamily. In terms of assembly, homodimer. The cofactor is Mn(2+).

It localises to the cytoplasm. The catalysed reaction is 3-methyl-2-oxobutanoate + acetyl-CoA + H2O = (2S)-2-isopropylmalate + CoA + H(+). Its pathway is amino-acid biosynthesis; L-leucine biosynthesis; L-leucine from 3-methyl-2-oxobutanoate: step 1/4. Functionally, catalyzes the condensation of the acetyl group of acetyl-CoA with 3-methyl-2-oxobutanoate (2-ketoisovalerate) to form 3-carboxy-3-hydroxy-4-methylpentanoate (2-isopropylmalate). The chain is 2-isopropylmalate synthase from Thiobacillus denitrificans (strain ATCC 25259 / T1).